Here is a 156-residue protein sequence, read N- to C-terminus: Cellulose synthase operon protein D (156 aa).

Its pathway is glycan metabolism; bacterial cellulose biosynthesis. Functionally, may have a major role in the perfection of crystallization, involved either in the pore structure itself or in the organization of the pores within the linear array of terminal synthesizing complexes (TCs). The protein is Cellulose synthase operon protein D of Komagataeibacter sucrofermentans (strain ATCC 700178 / DSM 15973 / CECT 7291 / JCM 9730 / LMG 18788 / BPR 2001) (Acetobacter xylinus subsp. sucrofermentans).